The chain runs to 324 residues: MKQVDGEKLLARLGPGVDALRGRLTPDAPMDRVTWFQAGGLAELMFQPHDRDDLVTFLKLLPDDVPLTVVGVGSNLLVRDGGIPGVVIRLSAKGFGGLELEGENRIRAGAICPDKHIAAMAMDNNIGGFAFYYGIPGSIGGALRMNAGANGGETAERVIEVEAVDRQGNLHVLSKADMGYGYRHSSAPEGLIFISGLFEGFSQEKSAIRAEMDAVRQHRETVQPVKEKTGGSTFKNPEGHSAWELIDEVGGRGLMIGGAQMSSLHCNFMINVGHATAYDLEYLGETIRGQVFEQSGIKLQWEIKRLGLFMPGSEVKPFMGVTSE.

In terms of domain architecture, FAD-binding PCMH-type spans 38 to 217 (AGGLAELMFQ…IRAEMDAVRQ (180 aa)). Residue Arg-183 is part of the active site. Ser-232 serves as the catalytic Proton donor. Glu-302 is an active-site residue.

Belongs to the MurB family. FAD is required as a cofactor.

The protein localises to the cytoplasm. The catalysed reaction is UDP-N-acetyl-alpha-D-muramate + NADP(+) = UDP-N-acetyl-3-O-(1-carboxyvinyl)-alpha-D-glucosamine + NADPH + H(+). Its pathway is cell wall biogenesis; peptidoglycan biosynthesis. Functionally, cell wall formation. This is UDP-N-acetylenolpyruvoylglucosamine reductase from Allorhizobium ampelinum (strain ATCC BAA-846 / DSM 112012 / S4) (Agrobacterium vitis (strain S4)).